The sequence spans 183 residues: Holliday junction branch migration complex subunit RuvA (183 aa).

The interval 1–63 is domain I; the sequence is MIVGLIGVVE…EDAHLLYGFL (63 aa). Residues 64–139 form a domain II region; sequence EEGEKILFER…FFIQDENRPA (76 aa). Residue Ala139 is a region of interest, flexible linker. The segment at 139-183 is domain III; it reads ARNEVFLALESLGFKSAEINQVLKTLKPNLSIEAAIKEALQQLRS.

The protein belongs to the RuvA family. Homotetramer. Forms an RuvA(8)-RuvB(12)-Holliday junction (HJ) complex. HJ DNA is sandwiched between 2 RuvA tetramers; dsDNA enters through RuvA and exits via RuvB. An RuvB hexamer assembles on each DNA strand where it exits the tetramer. Each RuvB hexamer is contacted by two RuvA subunits (via domain III) on 2 adjacent RuvB subunits; this complex drives branch migration. In the full resolvosome a probable DNA-RuvA(4)-RuvB(12)-RuvC(2) complex forms which resolves the HJ.

The protein resides in the cytoplasm. In terms of biological role, the RuvA-RuvB-RuvC complex processes Holliday junction (HJ) DNA during genetic recombination and DNA repair, while the RuvA-RuvB complex plays an important role in the rescue of blocked DNA replication forks via replication fork reversal (RFR). RuvA specifically binds to HJ cruciform DNA, conferring on it an open structure. The RuvB hexamer acts as an ATP-dependent pump, pulling dsDNA into and through the RuvAB complex. HJ branch migration allows RuvC to scan DNA until it finds its consensus sequence, where it cleaves and resolves the cruciform DNA. This Helicobacter pylori (strain ATCC 700392 / 26695) (Campylobacter pylori) protein is Holliday junction branch migration complex subunit RuvA.